The following is a 232-amino-acid chain: MSEVITVKQTNMENIYECEFNDGSFRLCTRNLVSGFNVYGERLIKYEGVEYREWNAFRSKLAGAILKGLKTNPIRKGTKVLYLGAASGTTISHVSDIIELNGKAYGVEFSPRVVRELLLVAQRRPNIFPLLADARFPQSYKSVVENVDVLYVDIAQPDQTDIAIYNARFFLKVNGYMLLVIKARSIDVTKDPKEIYKAEVEKLENSNFETIQIINLDPYDKDHAIVLSRYKG.

S-adenosyl-L-methionine-binding positions include 89–90 (TT), 108–109 (EF), 133–134 (DA), and 153–156 (DIAQ).

Belongs to the methyltransferase superfamily. Fibrillarin family. In terms of assembly, interacts with nop5. Component of box C/D small ribonucleoprotein (sRNP) particles that contain rpl7ae, FlpA and nop5, plus a guide RNA.

In terms of biological role, involved in pre-rRNA and tRNA processing. Utilizes the methyl donor S-adenosyl-L-methionine to catalyze the site-specific 2'-hydroxyl methylation of ribose moieties in rRNA and tRNA. Site specificity is provided by a guide RNA that base pairs with the substrate. Methylation occurs at a characteristic distance from the sequence involved in base pairing with the guide RNA. The chain is Fibrillarin-like rRNA/tRNA 2'-O-methyltransferase from Saccharolobus islandicus (strain M.16.27) (Sulfolobus islandicus).